The primary structure comprises 386 residues: Succinyl-diaminopimelate desuccinylase (386 aa).

Histidine 77 is a Zn(2+) binding site. Aspartate 79 is a catalytic residue. Aspartate 110 serves as a coordination point for Zn(2+). Glutamate 144 acts as the Proton acceptor in catalysis. Zn(2+)-binding residues include glutamate 145, glutamate 173, and histidine 359.

The protein belongs to the peptidase M20A family. DapE subfamily. As to quaternary structure, homodimer. Zn(2+) is required as a cofactor. Requires Co(2+) as cofactor.

It catalyses the reaction N-succinyl-(2S,6S)-2,6-diaminopimelate + H2O = (2S,6S)-2,6-diaminopimelate + succinate. The protein operates within amino-acid biosynthesis; L-lysine biosynthesis via DAP pathway; LL-2,6-diaminopimelate from (S)-tetrahydrodipicolinate (succinylase route): step 3/3. In terms of biological role, catalyzes the hydrolysis of N-succinyl-L,L-diaminopimelic acid (SDAP), forming succinate and LL-2,6-diaminopimelate (DAP), an intermediate involved in the bacterial biosynthesis of lysine and meso-diaminopimelic acid, an essential component of bacterial cell walls. The polypeptide is Succinyl-diaminopimelate desuccinylase (Methylibium petroleiphilum (strain ATCC BAA-1232 / LMG 22953 / PM1)).